The following is a 258-amino-acid chain: Imidazole glycerol phosphate synthase subunit HisF (258 aa).

Active-site residues include Asp11 and Asp130.

It belongs to the HisA/HisF family. Heterodimer of HisH and HisF.

The protein localises to the cytoplasm. The enzyme catalyses 5-[(5-phospho-1-deoxy-D-ribulos-1-ylimino)methylamino]-1-(5-phospho-beta-D-ribosyl)imidazole-4-carboxamide + L-glutamine = D-erythro-1-(imidazol-4-yl)glycerol 3-phosphate + 5-amino-1-(5-phospho-beta-D-ribosyl)imidazole-4-carboxamide + L-glutamate + H(+). It functions in the pathway amino-acid biosynthesis; L-histidine biosynthesis; L-histidine from 5-phospho-alpha-D-ribose 1-diphosphate: step 5/9. In terms of biological role, IGPS catalyzes the conversion of PRFAR and glutamine to IGP, AICAR and glutamate. The HisF subunit catalyzes the cyclization activity that produces IGP and AICAR from PRFAR using the ammonia provided by the HisH subunit. The chain is Imidazole glycerol phosphate synthase subunit HisF from Blochmanniella pennsylvanica (strain BPEN).